The sequence spans 494 residues: 4-trimethylaminobutyraldehyde dehydrogenase (494 aa).

N-acetylserine is present on serine 2. At lysine 30 the chain carries N6-acetyllysine; alternate. N6-succinyllysine; alternate is present on lysine 30. N6-succinyllysine is present on lysine 59. NAD(+) contacts are provided by residues lysine 180 and 232–236; that span reads GSVPT. The Proton acceptor role is filled by glutamate 254. Cysteine 288 (nucleophile) is an active-site residue. The residue at position 298 (lysine 298) is an N6-acetyllysine. Residue lysine 303 is modified to N6-acetyllysine; alternate. Lysine 303 is subject to N6-succinyllysine; alternate. Residue lysine 344 is modified to N6-acetyllysine. An NAD(+)-binding site is contributed by glutamate 391.

It belongs to the aldehyde dehydrogenase family. As to quaternary structure, homotetramer.

The protein resides in the cytoplasm. It localises to the cytosol. The catalysed reaction is 4-(trimethylamino)butanal + NAD(+) + H2O = 4-(trimethylamino)butanoate + NADH + 2 H(+). The enzyme catalyses an aldehyde + NAD(+) + H2O = a carboxylate + NADH + 2 H(+). It catalyses the reaction 4-aminobutanal + NAD(+) + H2O = 4-aminobutanoate + NADH + 2 H(+). It carries out the reaction formaldehyde + NAD(+) + H2O = formate + NADH + 2 H(+). The catalysed reaction is acetaldehyde + NAD(+) + H2O = acetate + NADH + 2 H(+). The enzyme catalyses imidazole-4-acetaldehyde + NAD(+) + H2O = imidazole-4-acetate + NADH + 2 H(+). It catalyses the reaction acrolein + NAD(+) + H2O = acrylate + NADH + 2 H(+). It carries out the reaction (5-hydroxyindol-3-yl)acetaldehyde + NAD(+) + H2O = (5-hydroxyindol-3-yl)acetate + NADH + 2 H(+). The catalysed reaction is 3,4-dihydroxyphenylacetaldehyde + NAD(+) + H2O = 3,4-dihydroxyphenylacetate + NADH + 2 H(+). The enzyme catalyses spermine monoaldehyde + NAD(+) + H2O = N-(2-carboxyethyl)spermidine + NADH + 2 H(+). It catalyses the reaction propanal + NAD(+) + H2O = propanoate + NADH + 2 H(+). It carries out the reaction butanal + NAD(+) + H2O = butanoate + NADH + 2 H(+). The catalysed reaction is pentanal + NAD(+) + H2O = pentanoate + NADH + 2 H(+). The enzyme catalyses hexanal + NAD(+) + H2O = hexanoate + NADH + 2 H(+). The protein operates within amine and polyamine biosynthesis; carnitine biosynthesis. Converts gamma-trimethylaminobutyraldehyde into gamma-butyrobetaine with high efficiency (in vitro). Can catalyze the irreversible oxidation of a broad range of aldehydes to the corresponding acids in an NAD-dependent reaction, but with low efficiency. Catalyzes the oxidation of aldehydes arising from biogenic amines and polyamines. The protein is 4-trimethylaminobutyraldehyde dehydrogenase (ALDH9A1) of Pongo abelii (Sumatran orangutan).